The following is a 380-amino-acid chain: SAM and SH3 domain-containing protein 3 (380 aa).

Residues 1-174 are disordered; it reads MLRRKPSNAS…STAPQYTGPF (174 aa). Residues 22 to 41 are compositionally biased toward low complexity; the sequence is LQRSSSFKDFAKSKPSSPVV. Phosphoserine is present on residues S27, S34, and S42. Phosphothreonine is present on T61. Residues 84-93 are compositionally biased toward basic residues; sequence MNRKTGKKMV. S97 is subject to Phosphoserine. T103 carries the post-translational modification Phosphothreonine. S110 carries the phosphoserine modification. Position 112 is a phosphothreonine (T112). Residues S113 and S120 each carry the phosphoserine modification. The span at 143 to 158 shows a compositional bias: polar residues; that stretch reads RQASTGSELCSPSPGS. Residues 173–234 enclose the SH3 domain; that stretch reads PFCGRARVHT…KFIYVDVLPE (62 aa). Positions 252-316 constitute an SAM domain; that stretch reads PKPKTLHELL…LTAAELLLDY (65 aa). T318 is subject to Phosphothreonine. Acidic residues predominate over residues 318-327; sequence TGSEEAEEGT. Residues 318-380 form a disordered region; the sequence is TGSEEAEEGT…LHGLSLSGAP (63 aa). Residue S320 is modified to Phosphoserine.

This sequence belongs to the SASH family.

Its function is as follows. May function as a signaling adapter protein in lymphocytes. The polypeptide is SAM and SH3 domain-containing protein 3 (Bos taurus (Bovine)).